The sequence spans 3051 residues: Biorientation of chromosomes in cell division protein 1-like 1 (3051 aa).

Positions 1–33 (MATNPQPQPPPPAPPPPPPQPQPQPPPPPPGPG) are enriched in pro residues. Disordered regions lie at residues 1 to 47 (MATN…AGAG), 164 to 197 (HKEE…SANV), 215 to 288 (ASAA…CPVE), 301 to 393 (ILLN…KEDF), and 411 to 469 (VHTS…VRHA). Over residues 34–47 (AGPGAGGAGGAGAG) the composition is skewed to gly residues. Residues 215-227 (ASAARASTETSNA) show a composition bias toward low complexity. A compositionally biased stretch (basic and acidic residues) spans 246–263 (STDKERTSEDMADKEKST). At Ser266 the chain carries Phosphoserine. The segment covering 312–393 (SEQKNKSTDK…KTVEGTKEDF (82 aa)) has biased composition (basic and acidic residues). A compositionally biased stretch (acidic residues) spans 418–443 (SFEEDTEEEVVTSDSMEEGEITSDDE). Lys473 carries the N6-acetyllysine modification. A phosphoserine mark is found at Ser482 and Ser484. Basic and acidic residues-rich tracts occupy residues 497–527 (IAKE…EKTK), 549–570 (LEPK…EKKV), and 580–653 (SRNV…LERE). Residues 497-1203 (IAKEKEERLL…EKHADHRSTL (707 aa)) form a disordered region. 2 positions are modified to phosphoserine: Ser635 and Ser659. A phosphothreonine mark is found at Thr660 and Thr733. 6 stretches are compositionally biased toward basic and acidic residues: residues 671–772 (TDTR…EENI), 804–852 (KDGK…KIQK), 866–878 (RRSE…KCDM), 940–966 (KPDK…KPFE), 984–1021 (TQKD…DGHK), and 1028–1075 (SSKD…ENRR). Phosphoserine is present on Ser1077. 2 stretches are compositionally biased toward polar residues: residues 1092-1103 (NTLSTPSGSSLQ) and 1135-1148 (SKTQ…SQQD). Ser1145 and Ser1318 each carry phosphoserine. Residue Thr1354 is modified to Phosphothreonine. Disordered stretches follow at residues 1456–1550 (KLKH…QSEV), 1700–1725 (GSIS…ETEG), and 1760–1890 (VVLG…TGLG). Positions 1465-1479 (KVKDISIDVERRNEN) are enriched in basic and acidic residues. The span at 1482 to 1504 (VDTSAGSGSAPSVLHQRNGQTED) shows a compositional bias: polar residues. Phosphoserine is present on residues Ser1531, Ser1701, and Ser1710. Phosphoserine occurs at positions 2013, 2025, 2128, and 2203. 6 disordered regions span residues 2189–2210 (DFEG…STSK), 2258–2285 (TSSV…TPAE), 2403–2447 (STEE…FAGR), 2472–2519 (EDKS…AKDP), 2615–2635 (DQAS…FPEE), and 2717–3051 (VENS…KAKR). Positions 2191 to 2207 (EGPMPSAPPEAESPLAS) are enriched in low complexity. Residues 2428–2439 (AEKEEKHGKECP) show a composition bias toward basic and acidic residues. Position 2475 is a phosphoserine (Ser2475). The span at 2483–2492 (GSSTASYSAG) shows a compositional bias: low complexity. Residues Ser2501 and Ser2618 each carry the phosphoserine modification. 3 stretches are compositionally biased toward basic and acidic residues: residues 2621 to 2633 (KTGD…KSFP), 2724 to 2746 (TNEE…KDNA), and 2754 to 2767 (VEAD…EERH). A compositionally biased stretch (acidic residues) spans 2780–2789 (SEDEPDDNPD). Residues 2791-2822 (LDSRIETAQRQCPETEPHDTKEENSRDLEELP) show a composition bias toward basic and acidic residues. A compositionally biased stretch (polar residues) spans 2823-2834 (KTSSETNSTTSR). The span at 2848–2864 (TGEKPEQNDDDTIKSQE) shows a compositional bias: basic and acidic residues. Residues 2871–2880 (IKRKRGRPRK) are compositionally biased toward basic residues. A DNA-binding region (a.T hook) is located at residues 2872-2884 (KRKRGRPRKYPVE). The segment covering 2896-2910 (DTGIVTVEQSPSSSK) has biased composition (polar residues). A phosphoserine mark is found at Ser2905 and Ser2907. The segment covering 2944 to 2953 (VRRRGRKPKR) has biased composition (basic residues). Phosphoserine is present on Ser2954. Position 2956 is a phosphothreonine (Thr2956). Residues Ser2958, Ser2964, and Ser2973 each carry the phosphoserine modification. Residues Lys2981 and Lys2982 each participate in a glycyl lysine isopeptide (Lys-Gly) (interchain with G-Cter in ubiquitin) cross-link. Residues 2985 to 2998 (ESDEEEEEEEEDEP) show a composition bias toward acidic residues. A phosphoserine mark is found at Ser2986 and Ser3019. Residues 3000–3020 (GATTRSTTRSEAQRSKTQLSP) show a composition bias toward polar residues. The segment covering 3039 to 3051 (QRVEEAPVKKAKR) has biased composition (basic and acidic residues).

Belongs to the BOD1 family. As to quaternary structure, interacts (via COMPASS-Shg1 domain) with SETD1A at stalled replication forks; this interaction mediates FANCD2-dependent nucleosome remodeling at reversed forks protecting them from nucleolytic degradation.

It is found in the chromosome. In terms of biological role, component of the fork protection machinery required to protect stalled/damaged replication forks from uncontrolled DNA2-dependent resection. Acts by stabilizing RAD51 at stalled replication forks and protecting RAD51 nucleofilaments from the antirecombinogenic activities of FBH1 and BLM. Does not regulate spindle orientation. The chain is Biorientation of chromosomes in cell division protein 1-like 1 from Homo sapiens (Human).